The primary structure comprises 421 residues: Testin (421 aa).

In terms of domain architecture, PET spans 92–199 (MILTNPVAAK…GDVKLPCEMD (108 aa)). A disordered region spans residues 133–164 (EKQPVAGSEGAQYRKKQLAKQLPAHDQDPSKC). The segment covering 155–164 (PAHDQDPSKC) has biased composition (basic and acidic residues). LIM zinc-binding domains lie at 234–297 (YSCY…CDSE), 299–359 (PRCA…NHAV), and 362–421 (QGCH…KMMS).

This sequence belongs to the prickle / espinas / testin family. In terms of assembly, interacts via LIM domain 1 with ZYX. Interacts (via LIM domain 3) with ENAH and VASP. Interacts with ALKBH4, talin, actin, alpha-actinin, GRIP1 and PXN. Interacts (via LIM domain 2) with ACTL7A (via N-terminus). Heterodimer with ACTL7A; the heterodimer interacts with ENAH to form a heterotrimer.

It localises to the cytoplasm. The protein resides in the cell junction. The protein localises to the focal adhesion. In terms of biological role, scaffold protein that may play a role in cell adhesion, cell spreading and in the reorganization of the actin cytoskeleton. Plays a role in the regulation of cell proliferation. May act as a tumor suppressor. The sequence is that of Testin (TES) from Papio anubis (Olive baboon).